We begin with the raw amino-acid sequence, 503 residues long: Aspartyl/glutamyl-tRNA(Asn/Gln) amidotransferase subunit B (503 aa).

It belongs to the GatB/GatE family. GatB subfamily. As to quaternary structure, heterotrimer of A, B and C subunits.

The catalysed reaction is L-glutamyl-tRNA(Gln) + L-glutamine + ATP + H2O = L-glutaminyl-tRNA(Gln) + L-glutamate + ADP + phosphate + H(+). It catalyses the reaction L-aspartyl-tRNA(Asn) + L-glutamine + ATP + H2O = L-asparaginyl-tRNA(Asn) + L-glutamate + ADP + phosphate + 2 H(+). Its function is as follows. Allows the formation of correctly charged Asn-tRNA(Asn) or Gln-tRNA(Gln) through the transamidation of misacylated Asp-tRNA(Asn) or Glu-tRNA(Gln) in organisms which lack either or both of asparaginyl-tRNA or glutaminyl-tRNA synthetases. The reaction takes place in the presence of glutamine and ATP through an activated phospho-Asp-tRNA(Asn) or phospho-Glu-tRNA(Gln). The chain is Aspartyl/glutamyl-tRNA(Asn/Gln) amidotransferase subunit B from Cereibacter sphaeroides (strain KD131 / KCTC 12085) (Rhodobacter sphaeroides).